The following is a 228-amino-acid chain: Translin (228 aa).

The interval arginine 86–histidine 90 is DNA/RNA binding. Positions leucine 177–leucine 198 are leucine-zipper. Position 187 is an N6-acetyllysine (lysine 187). The residue at position 190 (serine 190) is a Phosphoserine. An N6-acetyllysine modification is found at lysine 199.

This sequence belongs to the translin family. In terms of assembly, ring-shaped heterooctamer of six TSN and two TSNAX subunits, DNA/RNA binding occurs inside the ring.

It is found in the cytoplasm. It localises to the nucleus. DNA-binding protein that specifically recognizes consensus sequences at the breakpoint junctions in chromosomal translocations, mostly involving immunoglobulin (Ig)/T-cell receptor gene segments. Seems to recognize single-stranded DNA ends generated by staggered breaks occurring at recombination hot spots. Its function is as follows. Exhibits both single-stranded and double-stranded endoribonuclease activity. May act as an activator of RNA-induced silencing complex (RISC) by facilitating endonucleolytic cleavage of the siRNA passenger strand. This chain is Translin, found in Homo sapiens (Human).